The sequence spans 157 residues: Pyruvoyl-dependent arginine decarboxylase 1 (157 aa).

Residue Ser41 is modified to Pyruvic acid (Ser).

It belongs to the PdaD family. The cofactor is pyruvate.

The catalysed reaction is L-arginine + H(+) = agmatine + CO2. In Archaeoglobus fulgidus (strain ATCC 49558 / DSM 4304 / JCM 9628 / NBRC 100126 / VC-16), this protein is Pyruvoyl-dependent arginine decarboxylase 1 (pdaD1).